The primary structure comprises 52 residues: uncharacterized protein (52 aa).

Residues 1–52 (MFGFIYRDPSPAPQGKIRDGSKDPKTPGGGGGGGGGISPNGGAPLGGKGFSM) form a disordered region. Positions 16–25 (KIRDGSKDPK) are enriched in basic and acidic residues. Positions 27 to 52 (PGGGGGGGGGISPNGGAPLGGKGFSM) are enriched in gly residues.

This is an uncharacterized protein from Dictyostelium discoideum (Social amoeba).